The sequence spans 170 residues: Transmembrane protein 217B (170 aa).

A signal peptide spans 1 to 21; it reads MNVRMFSLMVGIFSVLNTTQF. The Lumenal segment spans residues 22–58; sequence FIFDLNQKTHICYEAKFSIYVDSKSELVTWTLFHRAN. A helical transmembrane segment spans residues 59-79; sequence ISTGLSLTTIIIGCFLFYCIH. The Cytoplasmic segment spans residues 80–85; sequence KNIYMG. The chain crosses the membrane as a helical span at residues 86–106; sequence LLIYAMWIITYELINFSIVLL. Residues 107-120 lie on the Lumenal side of the membrane; the sequence is LNGIIKDHFKTLSY. The helical transmembrane segment at 121–141 threads the bilayer; it reads LHWIFQISHMLLHFFCLPFIV. Topologically, residues 142 to 170 are cytoplasmic; sequence KHAYNLYKESQTVGRKRRHRLCSTIAVNS.

It localises to the membrane. The chain is Transmembrane protein 217B from Homo sapiens (Human).